The sequence spans 510 residues: 2,3-bisphosphoglycerate-independent phosphoglycerate mutase (510 aa).

Mn(2+) is bound by residues D16 and S66. Catalysis depends on S66, which acts as the Phosphoserine intermediate. Residues H127, R156–D157, R186, R192, R257–R260, and K333 contribute to the substrate site. Residues D400, H404, D441, H442, and H460 each contribute to the Mn(2+) site.

The protein belongs to the BPG-independent phosphoglycerate mutase family. Monomer. It depends on Mn(2+) as a cofactor.

It carries out the reaction (2R)-2-phosphoglycerate = (2R)-3-phosphoglycerate. It participates in carbohydrate degradation; glycolysis; pyruvate from D-glyceraldehyde 3-phosphate: step 3/5. Its function is as follows. Catalyzes the interconversion of 2-phosphoglycerate and 3-phosphoglycerate. This Gluconobacter oxydans (strain 621H) (Gluconobacter suboxydans) protein is 2,3-bisphosphoglycerate-independent phosphoglycerate mutase.